The primary structure comprises 142 residues: Peptide methionine sulfoxide reductase MsrB (142 aa).

In terms of domain architecture, MsrB spans I2–Y125. C114 serves as the catalytic Nucleophile.

It belongs to the MsrB Met sulfoxide reductase family.

It catalyses the reaction L-methionyl-[protein] + [thioredoxin]-disulfide + H2O = L-methionyl-(R)-S-oxide-[protein] + [thioredoxin]-dithiol. The chain is Peptide methionine sulfoxide reductase MsrB from Staphylococcus epidermidis (strain ATCC 35984 / DSM 28319 / BCRC 17069 / CCUG 31568 / BM 3577 / RP62A).